The sequence spans 187 residues: Elongation factor P (187 aa).

This sequence belongs to the elongation factor P family.

The protein localises to the cytoplasm. The protein operates within protein biosynthesis; polypeptide chain elongation. Involved in peptide bond synthesis. Stimulates efficient translation and peptide-bond synthesis on native or reconstituted 70S ribosomes in vitro. Probably functions indirectly by altering the affinity of the ribosome for aminoacyl-tRNA, thus increasing their reactivity as acceptors for peptidyl transferase. This Prochlorococcus marinus (strain NATL2A) protein is Elongation factor P.